The primary structure comprises 151 residues: MASMQKRLQKELLALQNDPPAGMTLNERSVQNTITEWFIDMEGAQGTVYEGEKFQLLFKFSSRYPFESPQVMFTGENIPVHPHVYSNGHICLSILTEDWSPALSVQSVCLSIISMLSSCKEKRRPPDNSFYVKTCNKNPKKTKWWYHDDTC.

The UBC core domain maps to 3-151 (SMQKRLQKEL…TKWWYHDDTC (149 aa)). The Glycyl thioester intermediate role is filled by cysteine 91.

The protein belongs to the ubiquitin-conjugating enzyme family.

Its subcellular location is the nucleus. The enzyme catalyses S-ubiquitinyl-[E1 ubiquitin-activating enzyme]-L-cysteine + [E2 ubiquitin-conjugating enzyme]-L-cysteine = [E1 ubiquitin-activating enzyme]-L-cysteine + S-ubiquitinyl-[E2 ubiquitin-conjugating enzyme]-L-cysteine.. It catalyses the reaction S-ubiquitinyl-[E1 ubiquitin-activating enzyme]-L-cysteine + [acceptor protein]-N-terminal-amino acid = [E1 ubiquitin-activating enzyme]-L-cysteine + N-terminal-ubiquitinyl-[acceptor protein].. The protein operates within protein modification; protein ubiquitination. Its function is as follows. Accepts ubiquitin from the E1 complex and catalyzes its covalent attachment to other proteins. Catalyzes monoubiquitination. Involved in degradation of misfolded chaperone substrate and DNA repair. In Danio rerio (Zebrafish), this protein is Probable ubiquitin-conjugating enzyme E2 W-A (ube2wa).